The following is a 1904-amino-acid chain: Voltage-dependent calcium channel type A subunit alpha-1 (1904 aa).

The interval 1–45 (MLGGVGGRHMSTRRRGSSPLVRGGAGLTGYAGPGASGNSNDVAAI) is disordered. Gly residues predominate over residues 23–35 (GGAGLTGYAGPGA). At 30 to 168 (YAGPGASGNS…KHTRFIIEWP (139 aa)) the chain is on the cytoplasmic side. The I repeat unit spans residues 155-447 (NCIRKHTRFI…LVLGVLSGEF (293 aa)). The helical transmembrane segment at 169-187 (PFEYAVLLTIIANCVVLAL) threads the bilayer. The Extracellular portion of the chain corresponds to 188–205 (EEHLPKQDKTILAQKLEA). Residues 206–225 (TEIYFLGIFCVEASLKILAL) form a helical membrane-spanning segment. At 226-237 (GFVLHRGSYLRN) the chain is on the cytoplasmic side. A helical transmembrane segment spans residues 238-259 (IWNIMDFFVVVTGFITAFSQGI). Over 260 to 264 (ELDMD) the chain is Extracellular. Residues 265-283 (LRTLRAIRVLRPLKLVSGI) traverse the membrane as a helical segment. At 284–302 (PSLQVVLKSIIKAMAPLLQ) the chain is on the cytoplasmic side. Residues 303 to 322 (IGLLVLFAIVIFAIIGLEFY) form a helical membrane-spanning segment. Over 323–419 (SGTLHKTCYS…WTNDALGSTY (97 aa)) the chain is Extracellular. N-linked (GlcNAc...) asparagine glycosylation is found at N353 and N367. The helical transmembrane segment at 420–444 (NWIYFIPLIVLGSFFMLNLVLGVLS) threads the bilayer. Residues 445 to 568 (GEFAKEREKV…YWIRKSVKSQ (124 aa)) lie on the Cytoplasmic side of the membrane. A disordered region spans residues 513–543 (KKLGKSKSTDTEEEEGDDDQDDGELSSSTKE). The segment covering 523-536 (TEEEEGDDDQDDGE) has biased composition (acidic residues). The stretch at 554-797 (EKRFRYWIRK…VFLAIAVDNL (244 aa)) is one II repeat. A helical transmembrane segment spans residues 569–587 (KFYWFVIVLVFFNTVCVAV). Topologically, residues 588-602 (EHYGQPQWLTDFLYF) are extracellular. The helical transmembrane segment at 603–622 (AEFVFLALFMLEMFIKVYAL) threads the bilayer. The Cytoplasmic portion of the chain corresponds to 623 to 630 (GPRTYFDS). A helical transmembrane segment spans residues 631 to 649 (SFNRFDCVVISGSIFEVIW). Topologically, residues 650 to 658 (SEVKSGSFG) are extracellular. The chain crosses the membrane as a helical span at residues 659–677 (LSVLRALRLLRIFKVTKYW). Residues 678-696 (KSLRNLVISLLSSMRSIIS) lie on the Cytoplasmic side of the membrane. The chain crosses the membrane as a helical span at residues 697-716 (LLFLLFLFILIFALLGMQLF). Residues 717–769 (GGQFNFDSGTPPTNFNTFPIALLTVFQILTGEDWNEVMYQGIESQGGHKKGMI) are Extracellular-facing. The chain crosses the membrane as a helical span at residues 770-794 (YSLYFIVLVLFGNYTLLNVFLAIAV). At 795-895 (DNLANAQELS…VRRAAHWVVN (101 aa)) the chain is on the cytoplasmic side. The segment at 827–869 (QSLQNPKDGGAPKVEICPPNGKGGKQSSEEEKKQDEDDDTGPK) is disordered. An III repeat occupies 890–1177 (AHWVVNLRYF…IITFQEQGEA (288 aa)). A helical transmembrane segment spans residues 896–914 (LRYFDFFIMVVISLSSIAL). Residues 915–930 (AAEDPVWEDSPRNEVL) lie on the Extracellular side of the membrane. Residues 931–950 (NYFDYAFTGVFTVEMILKII) form a helical membrane-spanning segment. The Cytoplasmic portion of the chain corresponds to 951 to 962 (DLGIILHPGSYL). A helical membrane pass occupies residues 963-981 (REFWNIMDAVVVICAAVSF). Over 982 to 994 (AFDMTGSSAGQNL) the chain is Extracellular. The N-linked (GlcNAc...) asparagine glycan is linked to N993. A helical membrane pass occupies residues 995–1013 (STIKSLRVLRVLRPLKTIK). Residues 1014 to 1032 (RVPKLKAVFDCVVNSLKNV) lie on the Cytoplasmic side of the membrane. The helical transmembrane segment at 1033–1052 (INILIVYILFQFIFAVIAVQ) threads the bilayer. Over 1053–1141 (LFNGKFFYCS…EDKGPIQNFR (89 aa)) the chain is Extracellular. A helical transmembrane segment spans residues 1142–1166 (IEMSIFYIVYFIVFPFFFVNIFVAL). At 1167–1221 (IIITFQEQGEAELQDGEIDKNQKSCIDFTIQARPLERYMPKERNSVKYKIWRIVV) the chain is on the cytoplasmic side. The stretch at 1214–1470 (YKIWRIVVST…DNFDYLTRDS (257 aa)) is one IV repeat. Residues 1222-1250 (STPFEYFIMGLIVLNTVLLMMKFHRQSDA) form a helical membrane-spanning segment. Over 1251–1255 (YKNTL) the chain is Extracellular. The helical transmembrane segment at 1256-1275 (KYMNMCFTGMFTVECILKIA) threads the bilayer. Residues 1276–1283 (AFGVRNFF) are Cytoplasmic-facing. A helical membrane pass occupies residues 1284–1302 (KDAWNTFDFITVIGSIVDA). The Extracellular portion of the chain corresponds to 1303-1309 (LVIEFGE). Residues 1310-1328 (NFINVGFLRLFRAARLIKL) form a helical membrane-spanning segment. Residues 1329–1347 (LRQGYTIRILLWTFVQSFK) are Cytoplasmic-facing. A helical membrane pass occupies residues 1348-1367 (ALPYVCLLIAMLFFIYAIIG). Topologically, residues 1368–1431 (MQVFGNIALD…AKAGKQEGGC (64 aa)) are extracellular. A phenylalkylamine binding region spans residues 1430–1471 (GCGSNIAYAYFVSFIFFCSFLMLNLFVAVIMDNFDYLTRDSS). Residues 1432–1456 (GSNIAYAYFVSFIFFCSFLMLNLFV) traverse the membrane as a helical segment. Residues 1457–1904 (AVIMDNFDYL…HSDSDEDDWC (448 aa)) lie on the Cytoplasmic side of the membrane. An EF-hand domain is found at 1476 to 1511 (HHLDEFVRIWAEYDPNATGKIHYTEMYDMLKNMDPP). The Ca(2+) site is built by D1489, N1491, T1493, K1495, and E1500. Disordered stretches follow at residues 1652–1694 (THTG…HEGP), 1710–1788 (THHP…HSYP), and 1870–1904 (GGRL…DDWC). The span at 1670 to 1681 (RSPSLRHSPGRP) shows a compositional bias: low complexity. Residues 1682 to 1691 (GYDHHGHYYH) are compositionally biased toward basic and acidic residues. Residues 1710 to 1725 (THHPHPSQYNHRHRMR) show a composition bias toward basic residues. A compositionally biased stretch (low complexity) spans 1727–1740 (PWSASTSPARTPSP). Over residues 1751 to 1762 (GTTSLEQRSRSP) the composition is skewed to polar residues. Over residues 1771–1784 (PHTHQHYHRHHPHQ) the composition is skewed to basic residues.

Belongs to the calcium channel alpha-1 subunit (TC 1.A.1.11) family. CACNA1I subfamily. As to quaternary structure, interacts with CATSPER1 and CATSPER2, leading to suppress T-type calcium channel activity.

Its subcellular location is the membrane. Voltage-sensitive calcium channels (VSCC) mediate the entry of calcium ions into excitable cells and are also involved in a variety of calcium-dependent processes, including muscle contraction, neurotransmitter release, gene expression, cell motility, cell division and cell death. This Apis mellifera (Honeybee) protein is Voltage-dependent calcium channel type A subunit alpha-1 (CAC).